The chain runs to 193 residues: Corrinoid adenosyltransferase (193 aa).

ATP contacts are provided by residues 5–13 (TKTGDKGQT), Lys22, 130–135 (RRAERR), and Asn154.

It belongs to the Cob(I)alamin adenosyltransferase family. Homotrimer.

The protein resides in the cytoplasm. It catalyses the reaction 2 cob(II)yrinate a,c diamide + reduced [electron-transfer flavoprotein] + 2 ATP = 2 adenosylcob(III)yrinate a,c-diamide + 2 triphosphate + oxidized [electron-transfer flavoprotein] + 3 H(+). The enzyme catalyses 2 cob(II)alamin + reduced [electron-transfer flavoprotein] + 2 ATP = 2 adenosylcob(III)alamin + 2 triphosphate + oxidized [electron-transfer flavoprotein] + 3 H(+). It participates in cofactor biosynthesis; adenosylcobalamin biosynthesis; adenosylcobalamin from cob(II)yrinate a,c-diamide: step 2/7. The chain is Corrinoid adenosyltransferase (yvqK) from Bacillus subtilis (strain 168).